Consider the following 221-residue polypeptide: Pre-rRNA-processing protein SRD1 (221 aa).

Positions 101 to 110 (SKNRVTSACN) are enriched in polar residues. Disordered stretches follow at residues 101–121 (SKNRVTSACNSERRTTSQEAN) and 137–161 (ASITKKYSKKTTSRPKREKRQTILP). Over residues 142 to 155 (KYSKKTTSRPKREK) the composition is skewed to basic residues. A GATA-type zinc finger spans residues 168–193 (CSKCKDTWTIQWRSGPDQNRELCSPC). The tract at residues 201–221 (LKKENEKKRQAADKRIDRNNP) is disordered. The span at 203-221 (KENEKKRQAADKRIDRNNP) shows a compositional bias: basic and acidic residues.

It localises to the cytoplasm. Its subcellular location is the nucleus. Functionally, plays a direct or indirect role in pre-rRNA processing. This Saccharomyces cerevisiae (strain ATCC 204508 / S288c) (Baker's yeast) protein is Pre-rRNA-processing protein SRD1 (SRD1).